Reading from the N-terminus, the 224-residue chain is MKATVKGRYEGDKATAAATLAFTPSAADLRFKASATDAAFARGPSLEGLILTLEKPGSFLLDLKPHSKDVRFQFMNSALLLDRRVSLTYTHSTTLSPGPAKLPARTALDGSLTFDPANKLSLSHTLGSSGCRVKYSYAHGQDRLTTIEPCFDTANNAWDFAVTRKFQGGDAIKATYQASTKLLALDWTRDSKIGASFKVAASFDLSDQSKAPKLIAESTWNYEI.

Met-1 is a topological domain (cytoplasmic). The chain crosses the membrane as a beta stranded span at residues 2–11 (KATVKGRYEG). At 12-16 (DKATA) the chain is on the chloroplast intermembrane side. The beta stranded transmembrane segment at 17–28 (AATLAFTPSAAD) threads the bilayer. Over 29–32 (LRFK) the chain is Cytoplasmic. A beta stranded membrane pass occupies residues 33-42 (ASATDAAFAR). Over 43–55 (GPSLEGLILTLEK) the chain is Chloroplast intermembrane. Residues 56–64 (PGSFLLDLK) traverse the membrane as a beta stranded segment. At 65–70 (PHSKDV) the chain is on the cytoplasmic side. A beta stranded transmembrane segment spans residues 71–80 (RFQFMNSALL). Residues 81–101 (LDRRVSLTYTHSTTLSPGPAK) lie on the Chloroplast intermembrane side of the membrane. The beta stranded transmembrane segment at 102-111 (LPARTALDGS) threads the bilayer. The Cytoplasmic portion of the chain corresponds to 112 to 116 (LTFDP). Residues 117-126 (ANKLSLSHTL) traverse the membrane as a beta stranded segment. Topologically, residues 127 to 130 (GSSG) are chloroplast intermembrane. Residues 131–140 (CRVKYSYAHG) traverse the membrane as a beta stranded segment. The Cytoplasmic segment spans residues 141 to 154 (QDRLTTIEPCFDTA). The beta stranded transmembrane segment at 155-166 (NNAWDFAVTRKF) threads the bilayer. Residues 167 to 169 (QGG) are Chloroplast intermembrane-facing. The beta stranded transmembrane segment at 170–178 (DAIKATYQA) threads the bilayer. The Cytoplasmic portion of the chain corresponds to 179 to 180 (ST). Residues 181-189 (KLLALDWTR) traverse the membrane as a beta stranded segment. Over 190-212 (DSKIGASFKVAASFDLSDQSKAP) the chain is Chloroplast intermembrane. The beta stranded transmembrane segment at 213–222 (KLIAESTWNY) threads the bilayer. Topologically, residues 223–224 (EI) are cytoplasmic.

It belongs to the plastid outer envelope porin OEP24 (TC 1.B.28.1) family. Homooligomers form large rather nonselective pores in plastidial outer membranes.

It is found in the plastid. The protein resides in the etioplast membrane. It localises to the chloroplast outer membrane. Functionally, high-conductance voltage-dependent solute channel with a slight selectivity for cations transporting triosephosphates, dicarboxylic acids, ATP, inorganic phosphate (Pi), sugars, and positively or negatively charged amino acids. In Oryza sativa subsp. japonica (Rice), this protein is Outer envelope pore protein 24, chloroplastic (OEP24).